Reading from the N-terminus, the 62-residue chain is Large ribosomal subunit protein uL29 (62 aa).

Belongs to the universal ribosomal protein uL29 family.

The chain is Large ribosomal subunit protein uL29 from Helicobacter hepaticus (strain ATCC 51449 / 3B1).